A 51-amino-acid polypeptide reads, in one-letter code: QKLCQRPSGTWSGVCGNNNACRNQCINLEKARHGSCNYVFPAHKCICYFPC.

Gln1 is modified (pyrrolidone carboxylic acid). Disulfide bonds link Cys4-Cys51, Cys15-Cys36, Cys21-Cys45, and Cys25-Cys47. Ser8 is modified (phosphoserine; by CPK).

In terms of assembly, forms oligomers in its native state.

In terms of biological role, possesses antifungal activity sensitive to inorganic cations. This chain is Defensin-like protein 2A, found in Sinapis alba (White mustard).